The chain runs to 461 residues: 26S proteasome regulatory subunit 8 (461 aa).

185–192 (GPPGTGKT) serves as a coordination point for ATP.

Belongs to the AAA ATPase family.

The protein resides in the cytoplasm. It is found in the nucleus. Functionally, the 26S proteasome is involved in the ATP-dependent degradation of ubiquitinated proteins. The regulatory (or ATPase) complex confers ATP dependency and substrate specificity to the 26S complex. This Xenopus laevis (African clawed frog) protein is 26S proteasome regulatory subunit 8 (psmc5).